Consider the following 311-residue polypeptide: Porphobilinogen deaminase (311 aa).

Residue cysteine 245 is modified to S-(dipyrrolylmethanemethyl)cysteine.

The protein belongs to the HMBS family. As to quaternary structure, monomer. It depends on dipyrromethane as a cofactor.

The catalysed reaction is 4 porphobilinogen + H2O = hydroxymethylbilane + 4 NH4(+). The protein operates within porphyrin-containing compound metabolism; protoporphyrin-IX biosynthesis; coproporphyrinogen-III from 5-aminolevulinate: step 2/4. Its function is as follows. Tetrapolymerization of the monopyrrole PBG into the hydroxymethylbilane pre-uroporphyrinogen in several discrete steps. The protein is Porphobilinogen deaminase of Deinococcus deserti (strain DSM 17065 / CIP 109153 / LMG 22923 / VCD115).